A 658-amino-acid polypeptide reads, in one-letter code: DNA ligase (658 aa).

Residues Asp-32–Asp-36 and Ser-81–Leu-82 each bind NAD(+). The active-site N6-AMP-lysine intermediate is the Lys-112. Residues Arg-133, Glu-167, and Lys-306 each coordinate NAD(+). Residues Cys-400, Cys-403, Cys-416, and Cys-421 each contribute to the Zn(2+) site. One can recognise a BRCT domain in the interval Glu-577–Asn-658.

The protein belongs to the NAD-dependent DNA ligase family. LigA subfamily. It depends on Mg(2+) as a cofactor. Mn(2+) serves as cofactor.

It catalyses the reaction NAD(+) + (deoxyribonucleotide)n-3'-hydroxyl + 5'-phospho-(deoxyribonucleotide)m = (deoxyribonucleotide)n+m + AMP + beta-nicotinamide D-nucleotide.. DNA ligase that catalyzes the formation of phosphodiester linkages between 5'-phosphoryl and 3'-hydroxyl groups in double-stranded DNA using NAD as a coenzyme and as the energy source for the reaction. It is essential for DNA replication and repair of damaged DNA. This chain is DNA ligase, found in Helicobacter pylori (strain G27).